Consider the following 200-residue polypeptide: Holliday junction branch migration complex subunit RuvA (200 aa).

The interval Met1–Ile64 is domain I. The domain II stretch occupies residues Asp65 to Ala143. The segment at Pro144–Gln149 is flexible linker. The interval Val150–Lys200 is domain III.

Belongs to the RuvA family. Homotetramer. Forms an RuvA(8)-RuvB(12)-Holliday junction (HJ) complex. HJ DNA is sandwiched between 2 RuvA tetramers; dsDNA enters through RuvA and exits via RuvB. An RuvB hexamer assembles on each DNA strand where it exits the tetramer. Each RuvB hexamer is contacted by two RuvA subunits (via domain III) on 2 adjacent RuvB subunits; this complex drives branch migration. In the full resolvosome a probable DNA-RuvA(4)-RuvB(12)-RuvC(2) complex forms which resolves the HJ.

It is found in the cytoplasm. In terms of biological role, the RuvA-RuvB-RuvC complex processes Holliday junction (HJ) DNA during genetic recombination and DNA repair, while the RuvA-RuvB complex plays an important role in the rescue of blocked DNA replication forks via replication fork reversal (RFR). RuvA specifically binds to HJ cruciform DNA, conferring on it an open structure. The RuvB hexamer acts as an ATP-dependent pump, pulling dsDNA into and through the RuvAB complex. HJ branch migration allows RuvC to scan DNA until it finds its consensus sequence, where it cleaves and resolves the cruciform DNA. The polypeptide is Holliday junction branch migration complex subunit RuvA (Marinomonas sp. (strain MWYL1)).